A 238-amino-acid polypeptide reads, in one-letter code: Endonuclease V (238 aa).

Residues Asp46 and Asp116 each contribute to the Mg(2+) site.

It belongs to the endonuclease V family. Mg(2+) is required as a cofactor.

The protein localises to the cytoplasm. It catalyses the reaction Endonucleolytic cleavage at apurinic or apyrimidinic sites to products with a 5'-phosphate.. Functionally, DNA repair enzyme involved in the repair of deaminated bases. Selectively cleaves double-stranded DNA at the second phosphodiester bond 3' to a deoxyinosine leaving behind the intact lesion on the nicked DNA. This Bacillus velezensis (strain DSM 23117 / BGSC 10A6 / LMG 26770 / FZB42) (Bacillus amyloliquefaciens subsp. plantarum) protein is Endonuclease V.